Here is a 699-residue protein sequence, read N- to C-terminus: MADAGIRRVVPSDLYPLVLGFLRDNQLSEVANKFAKATGATQQDANASSLLDIYSFWLKSAKVPERKLQANGPVAKKAKKKASSSDSEDSSEEEEEVQGPPAKKAAVPAKRVGLPPGKAAAKASESSSSEESSDDDDEEDQKKQPVQKGVKPQAKAAKAPPKKAKSSDSDSDSSSEDEPPKNQKPKITPVTVKAQTKAPPKPARAAPKIANGKAASSSSSSSSSSSSDDSEEEKAAATPKKTVPKKQVVAKAPVKAATTPTRKSSSSEDSSSDEEEEQKKPMKNKPGPYSSVPPPSAPPPKKSLGTQPPKKAVEKQQPVESSEDSSDESDSSSEEEKKPPTKAVVSKATTKPPPAKKAAESSSDSSDSDSSEDDEAPSKPAGTTKNSSNKPAVTTKSPAVKPAAAPKQPVGGGQKLLTRKADSSSSEEESSSSEEEKTKKMVATTKPKATAKAALSLPAKQAPQGSRDSSSDSDSSSSEEEEEKTSKSAVKKKPQKVAGGAAPSKPASAKKGKAESSNSSSSDDSSEEEEEKLKGKGSPRPQAPKANGTSALTAQNGKAAKNSEEEEEEKKKAAVVVSKSGSLKKRKQNEAAKEAETPQAKKIKLQTPNTFPKRKKGEKRASSPFRRVREEEIEVDSRVADNSFDAKRGAAGDWGERANQVLKFTKGKSFRHEKTKKKRGSYRGGSISVQVNSIKFDSE.

A LisH domain is found at 10-42 (VPSDLYPLVLGFLRDNQLSEVANKFAKATGATQ). The residue at position 33 (lysine 33) is an N6-acetyllysine. Residues 65-637 (ERKLQANGPV…VREEEIEVDS (573 aa)) form a disordered region. Glycyl lysine isopeptide (Lys-Gly) (interchain with G-Cter in SUMO2) cross-links involve residues lysine 67 and lysine 76. The stretch at 84 to 95 (SSDSEDSSEEEE) is one Acidic serine cluster 1 repeat. The segment at 84–566 (SSDSEDSSEE…GKAAKNSEEE (483 aa)) is 11 X 12 AA approximate repeats of an acidic serine cluster. The span at 86–97 (DSEDSSEEEEEV) shows a compositional bias: acidic residues. 3 positions are modified to phosphoserine: serine 87, serine 90, and serine 91. Serine 91 carries the post-translational modification Diphosphoserine. Low complexity predominate over residues 100–110 (PPAKKAAVPAK). An Acidic serine cluster 2 repeat occupies 125–136 (ESSSSEESSDDD). Low complexity predominate over residues 144–159 (QPVQKGVKPQAKAAKA). The stretch at 167–178 (SDSDSDSSSEDE) is one Acidic serine cluster 3 repeat. Residue lysine 186 forms a Glycyl lysine isopeptide (Lys-Gly) (interchain with G-Cter in SUMO2) linkage. Threonine 188 is modified (phosphothreonine). Residue lysine 193 forms a Glycyl lysine isopeptide (Lys-Gly) (interchain with G-Cter in SUMO2) linkage. Low complexity-rich tracts occupy residues 193-227 (KAQT…SSSS) and 236-261 (AATP…TTPT). The interaction with RPA194 stretch occupies residues 204-382 (RAAPKIANGK…DDEAPSKPAG (179 aa)). An Acidic serine cluster 4 repeat occupies 221-232 (SSSSSSSDDSEE). One copy of the Acidic serine cluster 5 repeat lies at 264–275 (SSSSEDSSSDEE). A compositionally biased stretch (pro residues) spans 291 to 301 (SVPPPSAPPPK). Acidic residues predominate over residues 321–333 (SSEDSSDESDSSS). An Acidic serine cluster 6 repeat occupies 325-336 (SSDESDSSSEEE). Residues lysine 342 and lysine 347 each participate in a glycyl lysine isopeptide (Lys-Gly) (interchain with G-Cter in SUMO2) cross-link. 3 positions are modified to phosphoserine: serine 362, serine 363, and serine 366. The Acidic serine cluster 7 repeat unit spans residues 363–375 (SDSSDSDSSEDDE). A compositionally biased stretch (acidic residues) spans 366–375 (SDSDSSEDDE). The span at 381-397 (AGTTKNSSNKPAVTTKS) shows a compositional bias: polar residues. Glycyl lysine isopeptide (Lys-Gly) (interchain with G-Cter in SUMO2) cross-links involve residues lysine 390 and lysine 396. Serine 397 carries the post-translational modification Phosphoserine. The span at 398–409 (PAVKPAAAPKQP) shows a compositional bias: low complexity. Residues lysine 401 and lysine 407 each participate in a glycyl lysine isopeptide (Lys-Gly) (interchain with G-Cter in SUMO2) cross-link. At lysine 415 the chain carries N6-acetyllysine; alternate. A Glycyl lysine isopeptide (Lys-Gly) (interchain with G-Cter in SUMO1); alternate cross-link involves residue lysine 415. Lysine 415 is covalently cross-linked (Glycyl lysine isopeptide (Lys-Gly) (interchain with G-Cter in SUMO2); alternate). The Acidic serine cluster 8 repeat unit spans residues 425-436 (SSEEESSSSEEE). Glycyl lysine isopeptide (Lys-Gly) (interchain with G-Cter in SUMO2) cross-links involve residues lysine 440 and lysine 452. 2 stretches are compositionally biased toward low complexity: residues 441 to 476 (MVAT…SDSS) and 498 to 523 (AGGA…SSSD). Serine 456 is modified (phosphoserine). The stretch at 470–481 (SSDSDSSSSEEE) is one Acidic serine cluster 9 repeat. Residue lysine 505 forms a Glycyl lysine isopeptide (Lys-Gly) (interchain with G-Cter in SUMO2) linkage. Serine 508 carries the phosphoserine modification. One copy of the Acidic serine cluster 10 repeat lies at 519–529 (SSSSDDSSEEE). Serine 538 carries the post-translational modification Phosphoserine. The span at 547–556 (NGTSALTAQN) shows a compositional bias: polar residues. The Acidic serine cluster 11 repeat unit spans residues 555-566 (QNGKAAKNSEEE). Phosphoserine is present on serine 563. A Glycyl lysine isopeptide (Lys-Gly) (interchain with G-Cter in SUMO1) cross-link involves residue lysine 572. Residue lysine 579 forms a Glycyl lysine isopeptide (Lys-Gly) (interchain with G-Cter in SUMO2) linkage. Phosphoserine occurs at positions 580 and 582. Lysine 604 participates in a covalent cross-link: Glycyl lysine isopeptide (Lys-Gly) (interchain with G-Cter in SUMO2). 2 positions are modified to phosphothreonine: threonine 607 and threonine 610. Lysine 613 is covalently cross-linked (Glycyl lysine isopeptide (Lys-Gly) (interchain with G-Cter in SUMO2)). At serine 622 the chain carries Phosphoserine. Over residues 627 to 637 (RVREEEIEVDS) the composition is skewed to basic and acidic residues. Residue serine 643 is modified to Phosphoserine. Lysine 647 participates in a covalent cross-link: Glycyl lysine isopeptide (Lys-Gly) (interchain with G-Cter in SUMO2). N6-acetyllysine; alternate is present on lysine 663. Residue lysine 663 forms a Glycyl lysine isopeptide (Lys-Gly) (interchain with G-Cter in SUMO2); alternate linkage. At arginine 683 the chain carries Omega-N-methylarginine. Serine 686 is modified (phosphoserine). Lysine 695 is covalently cross-linked (Glycyl lysine isopeptide (Lys-Gly) (interchain with G-Cter in SUMO2)). A Phosphoserine modification is found at serine 698.

The protein belongs to the NOLC1 family. As to quaternary structure, heterodimer; heterodimerizes with TCOF1 following monoubiquitination. Interacts with RNA polymerase I 194 kDa subunit (RPA194) and with casein kinase-II. Interacts with DKC1/NAP57, NOP58 and fibrillarin. Undergoes rapid and massive phosphorylation/dephosphorylation cycles on CK2 and PKC sites. NOLC1 is one of the mostly phosphorylated proteins in the cell. Post-translationally, ubiquitinated. Monoubiquitination by the BCR(KBTBD8) complex promotes the formation of a NOLC1-TCOF1 complex that acts as a platform to connect RNA polymerase I with enzymes responsible for ribosomal processing and modification, leading to remodel the translational program of differentiating cells in favor of neural crest specification. In terms of processing, pyrophosphorylated by 5-diphosphoinositol pentakisphosphate (5-IP7). Serine pyrophosphorylation is achieved by Mg(2+)-dependent, but enzyme independent transfer of a beta-phosphate from a inositol pyrophosphate to a pre-phosphorylated serine residue.

It localises to the nucleus. The protein localises to the nucleolus. The protein resides in the cytoplasm. Its function is as follows. Nucleolar protein that acts as a regulator of RNA polymerase I by connecting RNA polymerase I with enzymes responsible for ribosomal processing and modification. Required for neural crest specification: following monoubiquitination by the BCR(KBTBD8) complex, associates with TCOF1 and acts as a platform to connect RNA polymerase I with enzymes responsible for ribosomal processing and modification, leading to remodel the translational program of differentiating cells in favor of neural crest specification. Involved in nucleologenesis, possibly by playing a role in the maintenance of the fundamental structure of the fibrillar center and dense fibrillar component in the nucleolus. It has intrinsic GTPase and ATPase activities. The protein is Nucleolar and coiled-body phosphoprotein 1 of Homo sapiens (Human).